The chain runs to 184 residues: Ribose 1,5-bisphosphate phosphokinase PhnN (184 aa).

11-18 is an ATP binding site; that stretch reads GPSGAGKD.

Belongs to the ribose 1,5-bisphosphokinase family.

The enzyme catalyses alpha-D-ribose 1,5-bisphosphate + ATP = 5-phospho-alpha-D-ribose 1-diphosphate + ADP. The protein operates within metabolic intermediate biosynthesis; 5-phospho-alpha-D-ribose 1-diphosphate biosynthesis; 5-phospho-alpha-D-ribose 1-diphosphate from D-ribose 5-phosphate (route II): step 3/3. In terms of biological role, catalyzes the phosphorylation of ribose 1,5-bisphosphate to 5-phospho-D-ribosyl alpha-1-diphosphate (PRPP). The polypeptide is Ribose 1,5-bisphosphate phosphokinase PhnN (Burkholderia mallei (strain SAVP1)).